A 441-amino-acid polypeptide reads, in one-letter code: Adenylyltransferase and sulfurtransferase MOCS3 (441 aa).

ATP contacts are provided by residues Gly83, Asp104, Thr111–Arg115, Lys128, and Asp172–Asn173. Residues Cys213 and Cys216 each coordinate Zn(2+). Cys230 (glycyl thioester intermediate; for adenylyltransferase activity) is an active-site residue. Residues Cys288 and Cys291 each contribute to the Zn(2+) site. One can recognise a Rhodanese domain in the interval Ala339 to Pro439. Cys395 acts as the Cysteine persulfide intermediate; for sulfurtransferase activity in catalysis.

In the N-terminal section; belongs to the HesA/MoeB/ThiF family. UBA4 subfamily. Zn(2+) serves as cofactor.

Its subcellular location is the cytoplasm. The enzyme catalyses [molybdopterin-synthase sulfur-carrier protein]-C-terminal Gly-Gly + ATP + H(+) = [molybdopterin-synthase sulfur-carrier protein]-C-terminal Gly-Gly-AMP + diphosphate. The catalysed reaction is [molybdopterin-synthase sulfur-carrier protein]-C-terminal Gly-Gly-AMP + S-sulfanyl-L-cysteinyl-[cysteine desulfurase] + AH2 = [molybdopterin-synthase sulfur-carrier protein]-C-terminal-Gly-aminoethanethioate + L-cysteinyl-[cysteine desulfurase] + A + AMP + 2 H(+). It participates in tRNA modification; 5-methoxycarbonylmethyl-2-thiouridine-tRNA biosynthesis. Its pathway is cofactor biosynthesis; molybdopterin biosynthesis. Plays a central role in 2-thiolation of mcm(5)S(2)U at tRNA wobble positions of cytosolic tRNA(Lys), tRNA(Glu) and tRNA(Gln). Also essential during biosynthesis of the molybdenum cofactor. Acts by mediating the C-terminal thiocarboxylation of sulfur carriers URM1 and MOCS2A. Its N-terminus first activates URM1 and MOCS2A as acyl-adenylates (-COAMP), then the persulfide sulfur on the catalytic cysteine is transferred to URM1 and MOCS2A to form thiocarboxylation (-COSH) of their C-terminus. The reaction probably involves hydrogen sulfide that is generated from the persulfide intermediate and that acts as a nucleophile towards URM1 and MOCS2A. Subsequently, a transient disulfide bond is formed. Does not use thiosulfate as sulfur donor; NFS1 probably acting as a sulfur donor for thiocarboxylation reactions. This Anopheles gambiae (African malaria mosquito) protein is Adenylyltransferase and sulfurtransferase MOCS3.